The chain runs to 233 residues: Biosynthetic peptidoglycan transglycosylase (233 aa).

A helical membrane pass occupies residues 7–27; it reads VFTWLAKLVLGLFFASILSVV.

Belongs to the glycosyltransferase 51 family.

Its subcellular location is the cell inner membrane. The enzyme catalyses [GlcNAc-(1-&gt;4)-Mur2Ac(oyl-L-Ala-gamma-D-Glu-L-Lys-D-Ala-D-Ala)](n)-di-trans,octa-cis-undecaprenyl diphosphate + beta-D-GlcNAc-(1-&gt;4)-Mur2Ac(oyl-L-Ala-gamma-D-Glu-L-Lys-D-Ala-D-Ala)-di-trans,octa-cis-undecaprenyl diphosphate = [GlcNAc-(1-&gt;4)-Mur2Ac(oyl-L-Ala-gamma-D-Glu-L-Lys-D-Ala-D-Ala)](n+1)-di-trans,octa-cis-undecaprenyl diphosphate + di-trans,octa-cis-undecaprenyl diphosphate + H(+). It participates in cell wall biogenesis; peptidoglycan biosynthesis. In terms of biological role, peptidoglycan polymerase that catalyzes glycan chain elongation from lipid-linked precursors. The protein is Biosynthetic peptidoglycan transglycosylase of Shewanella oneidensis (strain ATCC 700550 / JCM 31522 / CIP 106686 / LMG 19005 / NCIMB 14063 / MR-1).